Here is a 379-residue protein sequence, read N- to C-terminus: Sporozoite surface protein P36 (379 aa).

A signal peptide spans 1 to 33 (MAYNIWEEYIMANFHNVYPVVTNLFLFIALSYS). 2 6-Cys domains span residues 69 to 206 (FVFF…VKAN) and 215 to 379 (FIKG…TVES). 3 cysteine pairs are disulfide-bonded: Cys91-Cys101, Cys115-Cys186, and Cys129-Cys184. N-linked (GlcNAc...) asparagine glycosylation is found at Asn98 and Asn118. N-linked (GlcNAc...) asparagine glycosylation occurs at Asn206. Cystine bridges form between Cys219/Cys243, Cys257/Cys360, and Cys295/Cys358. N-linked (GlcNAc...) asparagine glycans are attached at residues Asn298 and Asn374.

It is found in the cell surface. The protein resides in the cell membrane. In terms of biological role, involved in sporozoite infection of hepatocytes and replication therein. The chain is Sporozoite surface protein P36 (PF36) from Plasmodium falciparum (isolate 3D7).